The sequence spans 105 residues: Protein Rev (105 aa).

A Phosphoserine; by host CK2 modification is found at Ser-5. Positions 18–26 (IIKILYQSN) are homomultimerization. Over residues 24-35 (QSNPYPDSSQGT) the composition is skewed to polar residues. Disordered regions lie at residues 24 to 49 (QSNPYPDSSQGTRQARRNRRRRWRAR) and 65 to 105 (LGGP…ATTE). A Nuclear localization signal and RNA-binding (RRE) motif is present at residues 35–51 (TRQARRNRRRRWRARQR). Basic residues predominate over residues 37 to 49 (QARRNRRRRWRAR). Positions 74–85 (LPLPPLGRLTLD) match the Nuclear export signal and binding to XPO1 motif. Positions 95–105 (TESQQGTATTE) are enriched in polar residues.

It belongs to the HIV-1 REV protein family. As to quaternary structure, homomultimer; when bound to the RRE. Multimeric assembly is essential for activity and may involve XPO1. Binds to human KPNB1, XPO1, TNPO1, RANBP5 and IPO7. Interacts with the viral Integrase. Interacts with human KHDRBS1. Interacts with human NAP1; this interaction decreases Rev multimerization and stimulates its activity. Interacts with human DEAD-box helicases DDX3 and DDX24; these interactions may serve for viral RNA export to the cytoplasm and packaging, respectively. Interacts with human PSIP1; this interaction may inhibit HIV-1 DNA integration by promoting dissociation of the Integrase-LEDGF/p75 complex. Post-translationally, asymmetrically arginine dimethylated at one site by host PRMT6. Methylation impairs the RNA-binding activity and export of viral RNA from the nucleus to the cytoplasm. Phosphorylated by protein kinase CK2. Presence of, and maybe binding to the N-terminus of the regulatory beta subunit of CK2 is necessary for CK2-mediated Rev's phosphorylation.

It localises to the host nucleus. Its subcellular location is the host nucleolus. The protein resides in the host cytoplasm. Functionally, escorts unspliced or incompletely spliced viral pre-mRNAs (late transcripts) out of the nucleus of infected cells. These pre-mRNAs carry a recognition sequence called Rev responsive element (RRE) located in the env gene, that is not present in fully spliced viral mRNAs (early transcripts). This function is essential since most viral proteins are translated from unspliced or partially spliced pre-mRNAs which cannot exit the nucleus by the pathway used by fully processed cellular mRNAs. Rev itself is translated from a fully spliced mRNA that readily exits the nucleus. Rev's nuclear localization signal (NLS) binds directly to KPNB1/Importin beta-1 without previous binding to KPNA1/Importin alpha-1. KPNB1 binds to the GDP bound form of RAN (Ran-GDP) and targets Rev to the nucleus. In the nucleus, the conversion from Ran-GDP to Ran-GTP dissociates Rev from KPNB1 and allows Rev's binding to the RRE in viral pre-mRNAs. Rev multimerization on the RRE via cooperative assembly exposes its nuclear export signal (NES) to the surface. Rev can then form a complex with XPO1/CRM1 and Ran-GTP, leading to nuclear export of the complex. Conversion from Ran-GTP to Ran-GDP mediates dissociation of the Rev/RRE/XPO1/RAN complex, so that Rev can return to the nucleus for a subsequent round of export. Beside KPNB1, also seems to interact with TNPO1/Transportin-1, RANBP5/IPO5 and IPO7/RANBP7 for nuclear import. The nucleoporin-like HRB/RIP is an essential cofactor that probably indirectly interacts with Rev to release HIV RNAs from the perinuclear region to the cytoplasm. This Homo sapiens (Human) protein is Protein Rev.